A 297-amino-acid polypeptide reads, in one-letter code: Ribosomal RNA small subunit methyltransferase H (297 aa).

S-adenosyl-L-methionine-binding positions include 36–38, Asp-56, Leu-90, Asp-104, and His-111; that span reads GGH.

This sequence belongs to the methyltransferase superfamily. RsmH family.

It localises to the cytoplasm. The catalysed reaction is cytidine(1402) in 16S rRNA + S-adenosyl-L-methionine = N(4)-methylcytidine(1402) in 16S rRNA + S-adenosyl-L-homocysteine + H(+). Specifically methylates the N4 position of cytidine in position 1402 (C1402) of 16S rRNA. The polypeptide is Ribosomal RNA small subunit methyltransferase H (Dictyoglomus thermophilum (strain ATCC 35947 / DSM 3960 / H-6-12)).